Reading from the N-terminus, the 943-residue chain is 2-oxoglutarate dehydrogenase E1 component (943 aa).

This sequence belongs to the alpha-ketoglutarate dehydrogenase family. Homodimer. Part of the 2-oxoglutarate dehydrogenase (OGDH) complex composed of E1 (2-oxoglutarate dehydrogenase), E2 (dihydrolipoamide succinyltransferase) and E3 (dihydrolipoamide dehydrogenase); the complex contains multiple copies of the three enzymatic components (E1, E2 and E3). The cofactor is thiamine diphosphate.

The catalysed reaction is N(6)-[(R)-lipoyl]-L-lysyl-[protein] + 2-oxoglutarate + H(+) = N(6)-[(R)-S(8)-succinyldihydrolipoyl]-L-lysyl-[protein] + CO2. E1 component of the 2-oxoglutarate dehydrogenase (OGDH) complex which catalyzes the decarboxylation of 2-oxoglutarate, the first step in the conversion of 2-oxoglutarate to succinyl-CoA and CO(2). The polypeptide is 2-oxoglutarate dehydrogenase E1 component (Shouchella clausii (strain KSM-K16) (Alkalihalobacillus clausii)).